The chain runs to 477 residues: Bile acid transporter (477 aa).

Transmembrane regions (helical) follow at residues 13-33, 50-70, 83-103, 107-127, 139-159, 166-186, 206-226, 228-248, 272-292, 301-321, 333-353, 359-379, 381-401, 406-426, and 444-464; these read FVPF…TAVL, WISL…GKLG, IVIF…IFML, FIVG…IVTE, LYML…GLIM, VMMW…TFSI, LVVV…NIGW, STAF…LVMV, LILF…IVFV, IISS…SVII, VLTF…LFKA, IFAA…TIFM, VALS…YGLF, APFG…ANIA, and ISSI…GIIL.

The protein belongs to the major facilitator superfamily.

The protein resides in the cell membrane. The protein operates within lipid metabolism; bile acid degradation. The protein is Bile acid transporter (baiG) of Clostridium scindens (strain JCM 10418 / VPI 12708).